A 344-amino-acid chain; its full sequence is WW domain binding protein 1-like (344 aa).

The chain crosses the membrane as a helical span at residues 42-62 (LWWFWLVWTIIIILSCCCVCH). 2 disordered regions span residues 132 to 250 (LLPP…RFTG) and 302 to 321 (CLSSEGQAREHGHPHLPRPP). A compositionally biased stretch (low complexity) spans 145 to 173 (PGADQPQGSQGAQSSPLSGPSRSSTRPPS). A Phosphoserine modification is found at serine 173. Residues 212–228 (LDRDSECKEELLKDSSS) are compositionally biased toward basic and acidic residues.

It localises to the membrane. The protein is WW domain binding protein 1-like (Wbp1l) of Rattus norvegicus (Rat).